A 65-amino-acid polypeptide reads, in one-letter code: Putative primary metabolism protein prl65 (65 aa).

The interval 1 to 25 is disordered; sequence MTKYSKGNKVEYHPIGGPSGTSTST.

May play a role in primary metabolism. This chain is Putative primary metabolism protein prl65, found in Schizosaccharomyces pombe (strain 972 / ATCC 24843) (Fission yeast).